A 196-amino-acid polypeptide reads, in one-letter code: Crossover junction endodeoxyribonuclease RuvC (196 aa).

Active-site residues include Asp19, Glu80, and Asp153. 3 residues coordinate Mg(2+): Asp19, Glu80, and Asp153.

Belongs to the RuvC family. As to quaternary structure, homodimer which binds Holliday junction (HJ) DNA. The HJ becomes 2-fold symmetrical on binding to RuvC with unstacked arms; it has a different conformation from HJ DNA in complex with RuvA. In the full resolvosome a probable DNA-RuvA(4)-RuvB(12)-RuvC(2) complex forms which resolves the HJ. It depends on Mg(2+) as a cofactor.

Its subcellular location is the cytoplasm. The catalysed reaction is Endonucleolytic cleavage at a junction such as a reciprocal single-stranded crossover between two homologous DNA duplexes (Holliday junction).. Its function is as follows. The RuvA-RuvB-RuvC complex processes Holliday junction (HJ) DNA during genetic recombination and DNA repair. Endonuclease that resolves HJ intermediates. Cleaves cruciform DNA by making single-stranded nicks across the HJ at symmetrical positions within the homologous arms, yielding a 5'-phosphate and a 3'-hydroxyl group; requires a central core of homology in the junction. The consensus cleavage sequence is 5'-(A/T)TT(C/G)-3'. Cleavage occurs on the 3'-side of the TT dinucleotide at the point of strand exchange. HJ branch migration catalyzed by RuvA-RuvB allows RuvC to scan DNA until it finds its consensus sequence, where it cleaves and resolves the cruciform DNA. This is Crossover junction endodeoxyribonuclease RuvC from Cutibacterium acnes (strain DSM 16379 / KPA171202) (Propionibacterium acnes).